A 192-amino-acid chain; its full sequence is Actin, muscle (192 aa).

It belongs to the actin family.

The protein resides in the cytoplasm. It is found in the cytoskeleton. The enzyme catalyses ATP + H2O = ADP + phosphate + H(+). Its function is as follows. Actins are highly conserved proteins that are involved in various types of cell motility and are ubiquitously expressed in all eukaryotic cells. This Chionoecetes opilio (Atlantic snow crab) protein is Actin, muscle.